Here is a 235-residue protein sequence, read N- to C-terminus: 6-carboxyhexanoate--CoA ligase (235 aa).

Belongs to the BioW family. In terms of assembly, homodimer. Requires Mg(2+) as cofactor.

It carries out the reaction heptanedioate + ATP + CoA = 6-carboxyhexanoyl-CoA + AMP + diphosphate. Its pathway is metabolic intermediate metabolism; pimeloyl-CoA biosynthesis; pimeloyl-CoA from pimelate: step 1/1. In terms of biological role, catalyzes the transformation of pimelate into pimeloyl-CoA with concomitant hydrolysis of ATP to AMP. The protein is 6-carboxyhexanoate--CoA ligase of Desulfovibrio desulfuricans (strain ATCC 27774 / DSM 6949 / MB).